A 251-amino-acid polypeptide reads, in one-letter code: 3-dehydroquinate dehydratase (251 aa).

3-dehydroquinate is bound by residues 47 to 49 (EWR) and Arg83. The active-site Proton donor/acceptor is His144. The active-site Schiff-base intermediate with substrate is the Lys171. 3 residues coordinate 3-dehydroquinate: Arg214, Ser233, and Gln237.

This sequence belongs to the type-I 3-dehydroquinase family. As to quaternary structure, homodimer.

It carries out the reaction 3-dehydroquinate = 3-dehydroshikimate + H2O. The protein operates within metabolic intermediate biosynthesis; chorismate biosynthesis; chorismate from D-erythrose 4-phosphate and phosphoenolpyruvate: step 3/7. Its function is as follows. Involved in the third step of the chorismate pathway, which leads to the biosynthesis of aromatic amino acids. Catalyzes the cis-dehydration of 3-dehydroquinate (DHQ) and introduces the first double bond of the aromatic ring to yield 3-dehydroshikimate. This Klebsiella pneumoniae subsp. pneumoniae (strain ATCC 700721 / MGH 78578) protein is 3-dehydroquinate dehydratase.